The primary structure comprises 314 residues: tRNA pseudouridine synthase B (314 aa).

Position 43 (H43) interacts with substrate. D48 functions as the Nucleophile in the catalytic mechanism. The substrate site is built by Y76, Y179, and L200.

This sequence belongs to the pseudouridine synthase TruB family. Type 1 subfamily.

It carries out the reaction uridine(55) in tRNA = pseudouridine(55) in tRNA. In terms of biological role, responsible for synthesis of pseudouridine from uracil-55 in the psi GC loop of transfer RNAs. This Shigella boydii serotype 4 (strain Sb227) protein is tRNA pseudouridine synthase B.